We begin with the raw amino-acid sequence, 639 residues long: Protein sly1 homolog (639 aa).

4 tandem repeats follow at residues 85–121 (DENLDRIQQDFSSGLYDVYHLNFLAPITRSKIENLAA), 203–245 (RNSA…FSFQ), 423–460 (LDLLRDGEFGQAEDKLRLYIIYFICAQQLPESEQERLK), and 464–500 (QAAGCDLTALAYVQRWKGIMNRSPSISQATQYEGGGT). Residues 85–500 (DENLDRIQQD…QATQYEGGGT (416 aa)) are 4 X approximate repeats.

Belongs to the STXBP/unc-18/SEC1 family. In terms of tissue distribution, in embryos, from stage 14, expression is seen in posterior midgut, esophagus and salivary glands. No expression is seen in larval imaginal disks.

It localises to the cytoplasm. The protein localises to the membrane. Functionally, non-vital for development. This chain is Protein sly1 homolog (Slh), found in Drosophila melanogaster (Fruit fly).